Here is a 302-residue protein sequence, read N- to C-terminus: Lipoyl synthase (302 aa).

[4Fe-4S] cluster is bound by residues C44, C49, C55, C70, C74, C77, and S283. The region spanning 56–272 (WSKKHATVMI…AKVARSKGFL (217 aa)) is the Radical SAM core domain.

The protein belongs to the radical SAM superfamily. Lipoyl synthase family. [4Fe-4S] cluster serves as cofactor.

The protein resides in the cytoplasm. The catalysed reaction is [[Fe-S] cluster scaffold protein carrying a second [4Fe-4S](2+) cluster] + N(6)-octanoyl-L-lysyl-[protein] + 2 oxidized [2Fe-2S]-[ferredoxin] + 2 S-adenosyl-L-methionine + 4 H(+) = [[Fe-S] cluster scaffold protein] + N(6)-[(R)-dihydrolipoyl]-L-lysyl-[protein] + 4 Fe(3+) + 2 hydrogen sulfide + 2 5'-deoxyadenosine + 2 L-methionine + 2 reduced [2Fe-2S]-[ferredoxin]. It participates in protein modification; protein lipoylation via endogenous pathway; protein N(6)-(lipoyl)lysine from octanoyl-[acyl-carrier-protein]: step 2/2. Its function is as follows. Catalyzes the radical-mediated insertion of two sulfur atoms into the C-6 and C-8 positions of the octanoyl moiety bound to the lipoyl domains of lipoate-dependent enzymes, thereby converting the octanoylated domains into lipoylated derivatives. This chain is Lipoyl synthase, found in Orientia tsutsugamushi (strain Boryong) (Rickettsia tsutsugamushi).